The following is a 332-amino-acid chain: L-lactate dehydrogenase A chain (332 aa).

NAD(+) is bound by residues 29-57 (GMVG…MEDK) and Arg-99. The substrate site is built by Arg-106, Asn-138, and Arg-169. NAD(+) is bound at residue Asn-138. His-193 acts as the Proton acceptor in catalysis. Thr-248 contributes to the substrate binding site.

Belongs to the LDH/MDH superfamily. LDH family. As to quaternary structure, homotetramer.

It is found in the cytoplasm. It catalyses the reaction (S)-lactate + NAD(+) = pyruvate + NADH + H(+). The protein operates within fermentation; pyruvate fermentation to lactate; (S)-lactate from pyruvate: step 1/1. In terms of biological role, interconverts simultaneously and stereospecifically pyruvate and lactate with concomitant interconversion of NADH and NAD(+). The protein is L-lactate dehydrogenase A chain (ldha) of Fundulus heteroclitus (Killifish).